We begin with the raw amino-acid sequence, 108 residues long: V-type proton ATPase subunit G (108 aa).

The span at 48–60 (YASKKEEEFKKSE) shows a compositional bias: basic and acidic residues. Residues 48–89 (YASKKEEEFKKSESQASGIYSQAEAESKKQVQDTFASIETSS) are disordered. Residues 79–89 (QDTFASIETSS) are compositionally biased toward polar residues.

Belongs to the V-ATPase G subunit family. In terms of assembly, V-ATPase is a heteromultimeric enzyme composed of a peripheral catalytic V1 complex (components A to H) attached to an integral membrane V0 proton pore complex (components: a, c, c', c'', d, e, f and VOA1).

The protein localises to the vacuole membrane. Its function is as follows. Subunit of the V1 complex of vacuolar(H+)-ATPase (V-ATPase), a multisubunit enzyme composed of a peripheral complex (V1) that hydrolyzes ATP and a membrane integral complex (V0) that translocates protons. V-ATPase is responsible for acidifying and maintaining the pH of intracellular compartments. In Schizosaccharomyces pombe (strain 972 / ATCC 24843) (Fission yeast), this protein is V-type proton ATPase subunit G (vma10).